A 153-amino-acid polypeptide reads, in one-letter code: Cytochrome c-type biogenesis protein CcmE (153 aa).

The Cytoplasmic portion of the chain corresponds to 1-7 (MTRKKRR). Residues 8-28 (LYFVVLGMLALFAAAGLTLTA) traverse the membrane as a helical; Signal-anchor for type II membrane protein segment. The Periplasmic segment spans residues 29–153 (FQDNLVFFYS…PPTAAAAPAP (125 aa)). Positions 121 and 125 each coordinate heme. A disordered region spans residues 132 to 153 (ESLKASGKWQHGPPTAAAAPAP). Low complexity predominate over residues 144-153 (PPTAAAAPAP).

Belongs to the CcmE/CycJ family.

It is found in the cell inner membrane. Its function is as follows. Heme chaperone required for the biogenesis of c-type cytochromes. Transiently binds heme delivered by CcmC and transfers the heme to apo-cytochromes in a process facilitated by CcmF and CcmH. This Rhodospirillum rubrum (strain ATCC 11170 / ATH 1.1.1 / DSM 467 / LMG 4362 / NCIMB 8255 / S1) protein is Cytochrome c-type biogenesis protein CcmE.